Here is a 269-residue protein sequence, read N- to C-terminus: Intermembrane phospholipid transport system ATP-binding protein MlaF (269 aa).

The 237-residue stretch at 9 to 245 (VDMRDVSFTR…PDPRVRQFLD (237 aa)) folds into the ABC transporter domain. Residue 41–48 (GPSGIGKT) coordinates ATP.

This sequence belongs to the ABC transporter superfamily. MlaF family. The complex is composed of two ATP-binding proteins (MlaF), two transmembrane proteins (MlaE), two cytoplasmic solute-binding proteins (MlaB) and six periplasmic solute-binding proteins (MlaD).

The protein resides in the cell inner membrane. Part of the ABC transporter complex MlaFEDB, which is involved in a phospholipid transport pathway that maintains lipid asymmetry in the outer membrane by retrograde trafficking of phospholipids from the outer membrane to the inner membrane. Responsible for energy coupling to the transport system. The chain is Intermembrane phospholipid transport system ATP-binding protein MlaF from Escherichia coli O157:H7.